The following is a 752-amino-acid chain: Double zinc ribbon and ankyrin repeat-containing protein 1 (752 aa).

DZANK-type zinc fingers lie at residues 210-270 and 338-386; these read CPKC…VVCE and CSKC…GGCG. Basic and acidic residues predominate over residues 448–469; the sequence is KKRSQQREAELSRQEQMRDRKP. Disordered regions lie at residues 448-471 and 536-614; these read KKRS…KPLL and PPEE…VGPE. Low complexity predominate over residues 536 to 554; that stretch reads PPEESRSSSAGQRSRSVTS. A compositionally biased stretch (polar residues) spans 555 to 580; that stretch reads ESQNLSSVTEGRNSASPENNINTTGS. Basic and acidic residues predominate over residues 600–614; it reads PESKDSLLLKEVGPE. 3 ANK repeats span residues 638–667, 672–703, and 707–737; these read DGRP…DVNQ, LKNT…SIRK, and RGQT…GLLL.

The protein localises to the cytoplasm. The protein resides in the cytoskeleton. It is found in the microtubule organizing center. Its subcellular location is the centrosome. It localises to the cilium basal body. In terms of biological role, required for the intracellular transport of organelles and vesicles, and is essential for the photoreceptor's outer segments formation, maintenance and function. The sequence is that of Double zinc ribbon and ankyrin repeat-containing protein 1 (dzank1) from Danio rerio (Zebrafish).